The chain runs to 417 residues: Ribulose bisphosphate carboxylase large chain (417 aa).

Substrate-binding residues include asparagine 103 and threonine 153. Lysine 155 (proton acceptor) is an active-site residue. Lysine 157 lines the substrate pocket. Positions 181, 183, and 184 each coordinate Mg(2+). Position 181 is an N6-carboxylysine (lysine 181). The active-site Proton acceptor is histidine 274. The substrate site is built by arginine 275, histidine 307, and serine 359.

It belongs to the RuBisCO large chain family. Type I subfamily. In terms of assembly, heterohexadecamer of 8 large chains and 8 small chains. It depends on Mg(2+) as a cofactor.

The protein localises to the plastid. The protein resides in the chloroplast. The enzyme catalyses 2 (2R)-3-phosphoglycerate + 2 H(+) = D-ribulose 1,5-bisphosphate + CO2 + H2O. It catalyses the reaction D-ribulose 1,5-bisphosphate + O2 = 2-phosphoglycolate + (2R)-3-phosphoglycerate + 2 H(+). Functionally, ruBisCO catalyzes two reactions: the carboxylation of D-ribulose 1,5-bisphosphate, the primary event in carbon dioxide fixation, as well as the oxidative fragmentation of the pentose substrate in the photorespiration process. Both reactions occur simultaneously and in competition at the same active site. The protein is Ribulose bisphosphate carboxylase large chain of Acrostichum aureum (Golden leather fern).